A 301-amino-acid polypeptide reads, in one-letter code: Homoserine kinase (301 aa).

89-99 (KPGSGLGSSSA) is an ATP binding site.

The protein belongs to the GHMP kinase family. Homoserine kinase subfamily.

The protein localises to the cytoplasm. The catalysed reaction is L-homoserine + ATP = O-phospho-L-homoserine + ADP + H(+). The protein operates within amino-acid biosynthesis; L-threonine biosynthesis; L-threonine from L-aspartate: step 4/5. Catalyzes the ATP-dependent phosphorylation of L-homoserine to L-homoserine phosphate. This is Homoserine kinase from Methanococcus maripaludis (strain C5 / ATCC BAA-1333).